A 353-amino-acid chain; its full sequence is Heterogeneous nuclear ribonucleoproteins A2/B1 (353 aa).

Met1 is modified (N-acetylmethionine). Thr4 is modified (phosphothreonine). The short motif at 9 to 15 (PLERKKR) is the Nuclear localization signal element. RRM domains are found at residues 21-104 (RKLF…ESGK) and 112-191 (KKLF…LSRQ). Lys22 is covalently cross-linked (Glycyl lysine isopeptide (Lys-Gly) (interchain with G-Cter in SUMO2)). The residue at position 29 (Ser29) is a Phosphoserine. Arg38 carries the post-translational modification Omega-N-methylarginine. At Ser85 the chain carries Phosphoserine. Residue Lys104 is modified to N6,N6-dimethyllysine; alternate. Lys104 is covalently cross-linked (Glycyl lysine isopeptide (Lys-Gly) (interchain with G-Cter in SUMO2); alternate). Residues Lys112, Lys120, and Lys137 each participate in a glycyl lysine isopeptide (Lys-Gly) (interchain with G-Cter in SUMO2) cross-link. Thr140 bears the Phosphothreonine mark. Residue Ser149 is modified to Phosphoserine. Lys152 is covalently cross-linked (Glycyl lysine isopeptide (Lys-Gly) (interchain with G-Cter in SUMO2)). Thr159 is modified (phosphothreonine). Residues Lys168 and Lys173 each participate in a glycyl lysine isopeptide (Lys-Gly) (interchain with G-Cter in SUMO2); alternate cross-link. N6-acetyllysine; alternate occurs at positions 168 and 173. The residue at position 176 (Thr176) is a Phosphothreonine. Residue Lys186 forms a Glycyl lysine isopeptide (Lys-Gly) (interchain with G-Cter in SUMO2) linkage. Phosphoserine occurs at positions 189 and 201. A disordered region spans residues 193–353 (MQEVQSSRSG…SGGYGGRSRY (161 aa)). Over residues 202–223 (GRGGNFGFGDSRGGGGNFGPGP) the composition is skewed to gly residues. Position 203 is an asymmetric dimethylarginine; alternate (Arg203). The residue at position 203 (Arg203) is a Dimethylated arginine; alternate. Arg203 is modified (omega-N-methylarginine; alternate). Ser212 is modified (phosphoserine). Arg213 carries the post-translational modification Asymmetric dimethylarginine; alternate. Arg213 bears the Dimethylated arginine; alternate mark. An Omega-N-methylarginine; alternate modification is found at Arg213. Ser225 carries the post-translational modification Phosphoserine. Arg228 bears the Omega-N-methylarginine mark. 2 positions are modified to phosphoserine: Ser231 and Ser236. An Omega-N-methylarginine modification is found at Arg238. Position 259 is a phosphoserine (Ser259). Arg266 is modified (asymmetric dimethylarginine; alternate). Arg266 bears the Omega-N-methylarginine; alternate mark. The interval 308–347 (QQPSNYGPMKSGNFGGSRNMGGPYGGGNYGPGGSGGSGGY) is nuclear targeting sequence. Gly residues predominate over residues 320–353 (NFGGSRNMGGPYGGGNYGPGGSGGSGGYGGRSRY). Ser324 carries the post-translational modification Phosphoserine. Omega-N-methylarginine is present on Arg325. Residue Tyr331 is modified to Phosphotyrosine. Ser341 and Ser344 each carry phosphoserine. Residue Tyr347 is modified to Phosphotyrosine. Arg350 is subject to Omega-N-methylarginine.

In terms of assembly, homodimer; dimerization is required for nucleocytoplasmic translocation. Identified in the spliceosome C complex. Identified in a IGF2BP1-dependent mRNP granule complex containing untranslated mRNAs. Interacts with IGF2BP1. Interacts with C9orf72. Interacts with DGCR8. Interacts with TARDBP. Interacts with CKAP5. Interacts with TBK1. Interacts with STING1. Interacts with SRC. Interacts with PPIA/CYPA. Interacts (via C-terminus) with FAM76B; the interaction results in retention of HNRNPA2B1 in the nucleus and inhibition of the NF-kappa-B-mediated inflammatory pathway. Interacts with NF-kappa-B inhibitors NFKBIA and NFKBIE; the interaction may be mediated by the RRM2 domain of HNRNPA2B1, and HNRNPA2B1 may interact simultaneously with FAM76B and either NFKBIA or NFKBIE to form a complex. In terms of processing, asymmetric dimethylation at Arg-266 constitutes the major methylation site. According to a report, methylation affects subcellular location and promotes nuclear localization. According to another report, methylation at Arg-266 does not influence nucleocytoplasmic shuttling. Post-translationally, sumoylated in exosomes, promoting miRNAs-binding. In the brain, isoform A2 and isoform B1 are abundant in large ganglion-type neurons, such as Purkinje cells, and are less abundant in neighboring glia cells. Isoform A2 is more abundant than isoform B1 in brain. In testis, isoform A2 and isoform B1 are present in spermatogonia and spermatocytes, but not in spermatids or sperm. Isoform A2 is more abundant in the adrenal medulla than in the cortical cells. Isoform B1 is found in both adrenal medulla and cortical cells. Isoform A2 is more abundant than isoform B1 in the adrenal gland. Isoform A2 and isoform B1 are both detected in pancreas and kidney, and at lower levels in heart and lung. Isoform B1 is more abundant than isoform A2 in heart, lung and intestine (at protein level). Isoform A2b and isoform B1b are testis-specific.

Its subcellular location is the nucleus. The protein localises to the cytoplasm. The protein resides in the nucleoplasm. It localises to the cytoplasmic granule. It is found in the secreted. Its subcellular location is the extracellular exosome. Its function is as follows. Heterogeneous nuclear ribonucleoprotein (hnRNP) that associates with nascent pre-mRNAs, packaging them into hnRNP particles. The hnRNP particle arrangement on nascent hnRNA is non-random and sequence-dependent and serves to condense and stabilize the transcripts and minimize tangling and knotting. Packaging plays a role in various processes such as transcription, pre-mRNA processing, RNA nuclear export, subcellular location, mRNA translation and stability of mature mRNAs. Forms hnRNP particles with at least 20 other different hnRNP and heterogeneous nuclear RNA in the nucleus. Involved in transport of specific mRNAs to the cytoplasm in oligodendrocytes and neurons: acts by specifically recognizing and binding the A2RE (21 nucleotide hnRNP A2 response element) or the A2RE11 (derivative 11 nucleotide oligonucleotide) sequence motifs present on some mRNAs, and promotes their transport to the cytoplasm. Specifically binds single-stranded telomeric DNA sequences, protecting telomeric DNA repeat against endonuclease digestion. Also binds other RNA molecules, such as primary miRNA (pri-miRNAs): acts as a nuclear 'reader' of the N6-methyladenosine (m6A) mark by specifically recognizing and binding a subset of nuclear m6A-containing pri-miRNAs. Binding to m6A-containing pri-miRNAs promotes pri-miRNA processing by enhancing binding of DGCR8 to pri-miRNA transcripts. Involved in miRNA sorting into exosomes following sumoylation, possibly by binding (m6A)-containing pre-miRNAs. Acts as a regulator of efficiency of mRNA splicing, possibly by binding to m6A-containing pre-mRNAs. Plays a role in the splicing of pyruvate kinase PKM by binding repressively to sequences flanking PKM exon 9, inhibiting exon 9 inclusion and resulting in exon 10 inclusion and production of the PKM M2 isoform. Also plays a role in the activation of the innate immune response. Mechanistically, senses the presence of viral DNA in the nucleus, homodimerizes and is demethylated by JMJD6. In turn, translocates to the cytoplasm where it activates the TBK1-IRF3 pathway, leading to interferon alpha/beta production. The polypeptide is Heterogeneous nuclear ribonucleoproteins A2/B1 (Rattus norvegicus (Rat)).